A 330-amino-acid chain; its full sequence is Peptide transport system ATP-binding protein SapD (330 aa).

The 254-residue stretch at I6–I259 folds into the ABC transporter domain. G40–S47 lines the ATP pocket.

It belongs to the ABC transporter superfamily.

It localises to the cell inner membrane. Involved in a peptide intake transport system that plays a role in the resistance to antimicrobial peptides. This chain is Peptide transport system ATP-binding protein SapD (sapD), found in Escherichia coli O157:H7.